The following is a 320-amino-acid chain: Beta-ketoacyl-[acyl-carrier-protein] synthase III (320 aa).

Residues Cys-113 and His-247 contribute to the active site. An ACP-binding region spans residues 248–252 (QANRR). Asn-277 is a catalytic residue.

Belongs to the thiolase-like superfamily. FabH family. Homodimer.

It localises to the cytoplasm. It catalyses the reaction malonyl-[ACP] + acetyl-CoA + H(+) = 3-oxobutanoyl-[ACP] + CO2 + CoA. Its pathway is lipid metabolism; fatty acid biosynthesis. In terms of biological role, catalyzes the condensation reaction of fatty acid synthesis by the addition to an acyl acceptor of two carbons from malonyl-ACP. Catalyzes the first condensation reaction which initiates fatty acid synthesis and may therefore play a role in governing the total rate of fatty acid production. Possesses both acetoacetyl-ACP synthase and acetyl transacylase activities. Its substrate specificity determines the biosynthesis of branched-chain and/or straight-chain of fatty acids. This Acidiphilium cryptum (strain JF-5) protein is Beta-ketoacyl-[acyl-carrier-protein] synthase III.